The chain runs to 205 residues: Large ribosomal subunit protein uL4 (205 aa).

This sequence belongs to the universal ribosomal protein uL4 family. Part of the 50S ribosomal subunit.

Functionally, one of the primary rRNA binding proteins, this protein initially binds near the 5'-end of the 23S rRNA. It is important during the early stages of 50S assembly. It makes multiple contacts with different domains of the 23S rRNA in the assembled 50S subunit and ribosome. Forms part of the polypeptide exit tunnel. This Roseobacter denitrificans (strain ATCC 33942 / OCh 114) (Erythrobacter sp. (strain OCh 114)) protein is Large ribosomal subunit protein uL4.